The primary structure comprises 232 residues: UPF0235 protein At5g63440 (232 aa).

Belongs to the UPF0235 family. As to quaternary structure, interacts with CTN.

It localises to the nucleus speckle. Functionally, may play a role during early embryonic development. Probably involved in pre-mRNA splicing. The chain is UPF0235 protein At5g63440 from Arabidopsis thaliana (Mouse-ear cress).